Consider the following 808-residue polypeptide: Probable ATP-dependent helicase MJ1401 (808 aa).

The short motif at 189-217 is the Q motif element; sequence YKIDELDIPEELKEIIKSRGIEELLPVQT. Positions 221 to 391 constitute a Helicase ATP-binding domain; sequence KAGLLNGDDL…QLNAKLVLYN (171 aa). 234-241 is an ATP binding site; it reads SATSSGKT. The DEIH box motif lies at 336–339; sequence DEIH. The Helicase C-terminal domain maps to 396-585; sequence PLERHIIFCK…EDEEEEQILA (190 aa).

Belongs to the DEAD box helicase family.

This chain is Probable ATP-dependent helicase MJ1401, found in Methanocaldococcus jannaschii (strain ATCC 43067 / DSM 2661 / JAL-1 / JCM 10045 / NBRC 100440) (Methanococcus jannaschii).